We begin with the raw amino-acid sequence, 482 residues long: Membrane-bound lytic murein transglycosylase F (482 aa).

Residues 1 to 18 (MKGLFIRIVLAICLSLWA) form the signal peptide. The segment at 19–266 (IDMVFPWQQI…RIEEKYFNHL (248 aa)) is non-LT domain. The interval 267–482 (NQFDYVDTRS…ISTQTQQEQR (216 aa)) is LT domain. Residue E311 is part of the active site.

This sequence in the N-terminal section; belongs to the bacterial solute-binding protein 3 family. The protein in the C-terminal section; belongs to the transglycosylase Slt family.

The protein localises to the cell outer membrane. The enzyme catalyses Exolytic cleavage of the (1-&gt;4)-beta-glycosidic linkage between N-acetylmuramic acid (MurNAc) and N-acetylglucosamine (GlcNAc) residues in peptidoglycan, from either the reducing or the non-reducing ends of the peptidoglycan chains, with concomitant formation of a 1,6-anhydrobond in the MurNAc residue.. In terms of biological role, murein-degrading enzyme that degrades murein glycan strands and insoluble, high-molecular weight murein sacculi, with the concomitant formation of a 1,6-anhydromuramoyl product. Lytic transglycosylases (LTs) play an integral role in the metabolism of the peptidoglycan (PG) sacculus. Their lytic action creates space within the PG sacculus to allow for its expansion as well as for the insertion of various structures such as secretion systems and flagella. The chain is Membrane-bound lytic murein transglycosylase F from Histophilus somni (strain 129Pt) (Haemophilus somnus).